The sequence spans 465 residues: Sodium-dependent phosphate transport protein 1 (465 aa).

N-linked (GlcNAc...) asparagine glycosylation is found at N39, N47, and N56. The next 10 membrane-spanning stretches (helical) occupy residues 79-99 (GLIL…VGYL), 117-137 (SLMS…VIVC), 176-196 (FVMG…LLGW), 199-219 (VFYI…FLFF), 260-280 (LPLW…SLLV), 304-324 (LPYL…DFFL), 337-356 (LFTT…LLYL), 363-383 (TVIF…GQLI), 399-419 (VTAL…GLIL), and 429-449 (KIFF…FLFA).

Belongs to the major facilitator superfamily. Sodium/anion cotransporter family. As to quaternary structure, interacts with PDZK1. As to expression, kidney.

It localises to the apical cell membrane. The enzyme catalyses 3 Na(+)(out) + phosphate(out) = 3 Na(+)(in) + phosphate(in). The catalysed reaction is urate(out) = urate(in). Its function is as follows. Important for the resorption of phosphate by the kidney. May be involved in actively transporting phosphate into cells via Na(+) cotransport in the renal brush border membrane. Plays a role in urate transport in the kidney. The chain is Sodium-dependent phosphate transport protein 1 (Slc17a1) from Mus musculus (Mouse).